Consider the following 367-residue polypeptide: GTP cyclohydrolase FolE2 (367 aa).

This sequence belongs to the GTP cyclohydrolase IV family.

It catalyses the reaction GTP + H2O = 7,8-dihydroneopterin 3'-triphosphate + formate + H(+). Its pathway is cofactor biosynthesis; 7,8-dihydroneopterin triphosphate biosynthesis; 7,8-dihydroneopterin triphosphate from GTP: step 1/1. Functionally, converts GTP to 7,8-dihydroneopterin triphosphate. The protein is GTP cyclohydrolase FolE2 of Ruegeria sp. (strain TM1040) (Silicibacter sp.).